The primary structure comprises 248 residues: 1-(5-phosphoribosyl)-5-[(5-phosphoribosylamino)methylideneamino] imidazole-4-carboxamide isomerase (248 aa).

The Proton acceptor role is filled by aspartate 8. Catalysis depends on aspartate 131, which acts as the Proton donor.

This sequence belongs to the HisA/HisF family.

The protein localises to the cytoplasm. It catalyses the reaction 1-(5-phospho-beta-D-ribosyl)-5-[(5-phospho-beta-D-ribosylamino)methylideneamino]imidazole-4-carboxamide = 5-[(5-phospho-1-deoxy-D-ribulos-1-ylimino)methylamino]-1-(5-phospho-beta-D-ribosyl)imidazole-4-carboxamide. The protein operates within amino-acid biosynthesis; L-histidine biosynthesis; L-histidine from 5-phospho-alpha-D-ribose 1-diphosphate: step 4/9. This Paracidovorax citrulli (strain AAC00-1) (Acidovorax citrulli) protein is 1-(5-phosphoribosyl)-5-[(5-phosphoribosylamino)methylideneamino] imidazole-4-carboxamide isomerase.